A 1261-amino-acid chain; its full sequence is Myosin-1 (1261 aa).

Residues 1 to 39 form a disordered region; that stretch reads MGHSRRPVGGEKKSRGFGRSKVADVGDGRQAGKPQVKKA. Positions 49–728 constitute a Myosin motor domain; that stretch reads IGVSDLTLLS…TLFALEAMRD (680 aa). ATP is bound at residue 142–149; the sequence is GESGAGKT. At Ser370 the chain carries Phosphoserine. The actin-binding stretch occupies residues 417 to 499; the sequence is SIGILDIYGF…PGVFAALNDA (83 aa). IQ domains lie at 732-752 and 753-778; these read HNMA…RIEC and AIRI…QGHQ. Residues 786 to 973 form the TH1 domain; that stretch reads RRRMSLLGSR…KSHTIHTSPG (188 aa). Disordered regions lie at residues 956-1093 and 1139-1261; these read ASPN…KALY and YLEE…DDEW. Pro residues-rich tracts occupy residues 1019 to 1029, 1038 to 1052, 1072 to 1084, and 1147 to 1159; these read RPTPKPQPLPQ, IPAP…PVPQ, APPP…PPAP, and TPKP…PPAA. Positions 1084-1145 constitute an SH3 domain; it reads PKKATAKALY…PQAYLEEQVA (62 aa). Positions 1160-1181 are enriched in low complexity; it reads PRASPVPSANGAAATAAAAKAK. Over residues 1212-1233 the composition is skewed to polar residues; sequence VSMNSQDSSGGSGRGTPNSTSN. Over residues 1234–1243 the composition is skewed to low complexity; that stretch reads ASLAGGLAEA.

This sequence belongs to the TRAFAC class myosin-kinesin ATPase superfamily. Myosin family. Phosphorylation of the TEDS site (Ser-370) is required for the polarization of the actin cytoskeleton. Phosphorylation probably activates the myosin-I ATPase activity.

Its subcellular location is the cytoplasm. It is found in the cytoskeleton. The protein resides in the actin patch. Type-I myosin implicated in the organization of the actin cytoskeleton. Required for proper actin cytoskeleton polarization. At the cell cortex, assembles in patch-like structures together with proteins from the actin-polymerizing machinery and promotes actin assembly. Functions as actin nucleation-promoting factor (NPF) for the Arp2/3 complex. Plays an important role in polarized growth, spore germination, hyphal morphogenesis, and septal wall formation. This Aspergillus oryzae (strain ATCC 42149 / RIB 40) (Yellow koji mold) protein is Myosin-1 (myoA).